The sequence spans 262 residues: Phosphatidylglycerol--prolipoprotein diacylglyceryl transferase (262 aa).

A run of 4 helical transmembrane segments spans residues 17–37 (LAIH…YALG), 57–77 (LIFY…VLFY), 95–115 (GGMS…LFAH), and 119–139 (LGFF…LAAG). Arg140 is a binding site for a 1,2-diacyl-sn-glycero-3-phospho-(1'-sn-glycerol). 3 consecutive transmembrane segments (helical) span residues 173–193 (PSQL…LWWY), 200–220 (AGQV…LVEF), and 227–247 (FLGL…PMVL).

It belongs to the Lgt family.

It is found in the cell inner membrane. It carries out the reaction L-cysteinyl-[prolipoprotein] + a 1,2-diacyl-sn-glycero-3-phospho-(1'-sn-glycerol) = an S-1,2-diacyl-sn-glyceryl-L-cysteinyl-[prolipoprotein] + sn-glycerol 1-phosphate + H(+). Its pathway is protein modification; lipoprotein biosynthesis (diacylglyceryl transfer). Its function is as follows. Catalyzes the transfer of the diacylglyceryl group from phosphatidylglycerol to the sulfhydryl group of the N-terminal cysteine of a prolipoprotein, the first step in the formation of mature lipoproteins. The sequence is that of Phosphatidylglycerol--prolipoprotein diacylglyceryl transferase from Bordetella parapertussis (strain 12822 / ATCC BAA-587 / NCTC 13253).